The following is a 487-amino-acid chain: MKNKKRLCHILKYIITCFLFGVIFIIPIQAQIVLQTDFTDSENARQNIDYHFNVFNRITPLNGVKIKTPLGKPRVCIVRPLGGIVKNGKPDISKDSYKWDKKSKTFYTDFTVLKNQIDGVINSGYAIHQIVLDNPSWAFQRNKNGELVADSLKVSTYGNAEPPKDYNAWSNYLKDVLKFLVNTYGEESMLKIQFNIGREIGTPSHWSGSKEAFFEFYKISSSAIREVLPTAKVGTHFLWGSSKNAWGTDFIKWSKANNVHYDFIGVSFYPFYNKPDRTLFKEVYAKDFAVIKDIPEWHKNAKLEMHEYALIKSLNKAGNAFENAPKAQQNSFIVGLMKMFYEHNMQNVFQWGQGTNFEAAQEALFSIQGQTYYTSTKNGKPLLETNDVDAIFIKDVSNNIYNIMAYNYNANPNATTDEHLNLKAKLDVPPGTKVKVRFALYNKEKDTMSWSEWKEEATQGNEKSKSVISLNAELPVFSFLKYEVKVQ.

An N-terminal signal peptide occupies residues 1-30 (MKNKKRLCHILKYIITCFLFGVIFIIPIQA). The active-site Proton donor is the E199.

It belongs to the glycosyl hydrolase 39 family.

The protein resides in the periplasm. Alpha-rhamnosidase involved in ulvan degradation. Ulvan is the main polysaccharide component of the Ulvales (green seaweed) cell wall. It is composed of disaccharide building blocks comprising 3-sulfated rhamnose (Rha3S) linked to D-glucuronic acid (GlcA), L-iduronic acid (IduA), or D-xylose (Xyl). Endo-acting alpha-1,4-L-rhamnosidase cleaves rhamnose sections interspersed between xylose residues within the polymer, degrading larger oligomers with consecutive Xyl-Rha3S units that are resistant to the ulvan lyases and producing dimers Xyl-Rha3S and Xyl2S-Rha3S as the smallest products. This Formosa agariphila (strain DSM 15362 / KCTC 12365 / LMG 23005 / KMM 3901 / M-2Alg 35-1) protein is Alpha-1,4-L-rhamnosidase.